We begin with the raw amino-acid sequence, 296 residues long: 4-hydroxy-tetrahydrodipicolinate synthase (296 aa).

Residue T49 coordinates pyruvate. The Proton donor/acceptor role is filled by Y137. The Schiff-base intermediate with substrate role is filled by K166. Residue I208 participates in pyruvate binding.

This sequence belongs to the DapA family. As to quaternary structure, homotetramer; dimer of dimers.

It is found in the cytoplasm. It carries out the reaction L-aspartate 4-semialdehyde + pyruvate = (2S,4S)-4-hydroxy-2,3,4,5-tetrahydrodipicolinate + H2O + H(+). It functions in the pathway amino-acid biosynthesis; L-lysine biosynthesis via DAP pathway; (S)-tetrahydrodipicolinate from L-aspartate: step 3/4. Functionally, catalyzes the condensation of (S)-aspartate-beta-semialdehyde [(S)-ASA] and pyruvate to 4-hydroxy-tetrahydrodipicolinate (HTPA). This Azobacteroides pseudotrichonymphae genomovar. CFP2 protein is 4-hydroxy-tetrahydrodipicolinate synthase.